The primary structure comprises 346 residues: Isopentenyl-diphosphate delta-isomerase (346 aa).

9–10 (RK) is a substrate binding site. Residues Ser67, 68–70 (SMT), Ser98, and Asn127 contribute to the FMN site. Position 98 to 100 (98 to 100 (SQR)) interacts with substrate. A substrate-binding site is contributed by Gln162. Mg(2+) is bound at residue Glu163. Residues Lys194, Thr224, 274-276 (GIR), and 295-296 (AA) contribute to the FMN site.

It belongs to the IPP isomerase type 2 family. In terms of assembly, homooctamer. Dimer of tetramers. It depends on FMN as a cofactor. The cofactor is NADPH. Mg(2+) is required as a cofactor.

The protein localises to the cytoplasm. It carries out the reaction isopentenyl diphosphate = dimethylallyl diphosphate. In terms of biological role, involved in the biosynthesis of isoprenoids. Catalyzes the 1,3-allylic rearrangement of the homoallylic substrate isopentenyl (IPP) to its allylic isomer, dimethylallyl diphosphate (DMAPP). This Stutzerimonas stutzeri (strain A1501) (Pseudomonas stutzeri) protein is Isopentenyl-diphosphate delta-isomerase.